A 313-amino-acid polypeptide reads, in one-letter code: Apolipoprotein E (313 aa).

The signal sequence occupies residues 1–18 (MKVLWVALVITLLAGCQA). 8 consecutive repeat copies span residues 79–100 (VLMDETMKEVKAYREELEEQLG), 101–122 (PIAQETQARVSKELQAAQARLA), 123–144 (SDMEDVRSRLAQYRSEVQAVMG), 145–166 (QTTDELRGRLASHLRKLRKRLL), 167–188 (RDAEDLQKRLAVYRAGAVEGSE), 189–209 (RSVSAIRERLGPLMEKGRGRA), 210–229 (GTLASQTLRERAEAWHQKLR), and 230–251 (GRVEEMGTQARDHLEEIREQLE). The tract at residues 79–251 (VLMDETMKEV…HLEEIREQLE (173 aa)) is 8 X 22 AA approximate tandem repeats. The segment at 157 to 167 (HLRKLRKRLLR) is LDL and other lipoprotein receptors binding. A heparin-binding site is contributed by 161–164 (LRKR). Residues 209-286 (AGTLASQTLR…SWFEPLVEDM (78 aa)) are lipid-binding and lipoprotein association. 225–232 (HQKLRGRV) contributes to the heparin binding site. A homooligomerization region spans residues 262 to 313 (SQIRLQAEAFQARLKSWFEPLVEDMQRQWAGLVEKVQLAMATSSTSAPSENH). A specificity for association with VLDL region spans residues 274-286 (RLKSWFEPLVEDM).

Belongs to the apolipoprotein A1/A4/E family. In terms of assembly, homotetramer. May interact with ABCA1; functionally associated with ABCA1 in the biogenesis of HDLs. May interact with APP/A4 amyloid-beta peptide; the interaction is extremely stable in vitro but its physiological significance is unclear. May interact with MAPT. May interact with MAP2. In the cerebrospinal fluid, interacts with secreted SORL1. Interacts with PMEL; this allows the loading of PMEL luminal fragment on ILVs to induce fibril nucleation. APOE exists as multiple glycosylated and sialylated glycoforms within cells and in plasma. The extent of glycosylation and sialylation are tissue and context specific. Post-translationally, glycated in plasma VLDL. In terms of processing, phosphorylated by FAM20C in the extracellular medium.

The protein localises to the secreted. It localises to the extracellular space. Its subcellular location is the extracellular matrix. It is found in the extracellular vesicle. The protein resides in the endosome. The protein localises to the multivesicular body. Its function is as follows. APOE is an apolipoprotein, a protein associating with lipid particles, that mainly functions in lipoprotein-mediated lipid transport between organs via the plasma and interstitial fluids. APOE is a core component of plasma lipoproteins and is involved in their production, conversion and clearance. Apolipoproteins are amphipathic molecules that interact both with lipids of the lipoprotein particle core and the aqueous environment of the plasma. As such, APOE associates with chylomicrons, chylomicron remnants, very low density lipoproteins (VLDL) and intermediate density lipoproteins (IDL) but shows a preferential binding to high-density lipoproteins (HDL). It also binds a wide range of cellular receptors including the LDL receptor/LDLR and the very low-density lipoprotein receptor/VLDLR that mediate the cellular uptake of the APOE-containing lipoprotein particles. Finally, APOE also has a heparin-binding activity and binds heparan-sulfate proteoglycans on the surface of cells, a property that supports the capture and the receptor-mediated uptake of APOE-containing lipoproteins by cells. The polypeptide is Apolipoprotein E (APOE) (Balaenoptera acutorostrata scammoni (North Pacific minke whale)).